A 277-amino-acid chain; its full sequence is Co-chaperone protein DjlA (277 aa).

Topologically, residues 1 to 6 are periplasmic; sequence MRYWGK. The chain crosses the membrane as a helical span at residues 7 to 31; sequence LLGLVLGVMYAPGVVGALLGLLVGH. The Cytoplasmic segment spans residues 32 to 277; it reads MVDRALGAKR…DLIKREKGFK (246 aa). The J domain maps to 211 to 277; that stretch reads DACKVLGVNS…DLIKREKGFK (67 aa).

In terms of assembly, homodimer.

The protein resides in the cell inner membrane. In terms of biological role, regulatory DnaK co-chaperone. Direct interaction between DnaK and DjlA is needed for the induction of the wcaABCDE operon, involved in the synthesis of a colanic acid polysaccharide capsule, possibly through activation of the RcsB/RcsC phosphotransfer signaling pathway. The colanic acid capsule may help the bacterium survive conditions outside the host. The polypeptide is Co-chaperone protein DjlA (Yersinia pestis).